A 487-amino-acid polypeptide reads, in one-letter code: GTPase Der (487 aa).

2 EngA-type G domains span residues 3-166 and 199-372; these read PVVA…AEAM and IKLA…DSAT. GTP-binding positions include 9–16, 56–60, 118–121, 205–212, 252–256, and 317–320; these read GRPNVGKS, DTGGI, NKID, GKPNVGKS, DTAGV, and NKWD. In terms of domain architecture, KH-like spans 373 to 457; the sequence is RRVSTSMLTR…PIQLRFQEGD (85 aa).

It belongs to the TRAFAC class TrmE-Era-EngA-EngB-Septin-like GTPase superfamily. EngA (Der) GTPase family. As to quaternary structure, associates with the 50S ribosomal subunit.

Its function is as follows. GTPase that plays an essential role in the late steps of ribosome biogenesis. The protein is GTPase Der of Shewanella oneidensis (strain ATCC 700550 / JCM 31522 / CIP 106686 / LMG 19005 / NCIMB 14063 / MR-1).